We begin with the raw amino-acid sequence, 798 residues long: uncharacterized protein (798 aa).

Over residues 1–13 (MSSSQSPSTPSAS) the composition is skewed to low complexity. The N-terminal 58 residues, 1-58 (MSSSQSPSTPSASLVDSSDSKHPDDLPQIYKRRSVWTSSEDAVSSSNSPEQTTPFTVR), are a transit peptide targeting the chloroplast. Disordered stretches follow at residues 1 to 99 (MSSS…WQDA), 135 to 158 (AEKK…SMCT), and 417 to 473 (TGLI…AEPS). Residues 35 to 55 (VWTSSEDAVSSSNSPEQTTPF) are compositionally biased toward polar residues. Basic and acidic residues predominate over residues 57–79 (VREDTNADIARELDLPDDPEPHL). A compositionally biased stretch (basic residues) spans 137–146 (KKKRKKKKKA). A compositionally biased stretch (low complexity) spans 462–473 (AAPAEAQGAEPS). Residues 578 to 658 (RSNMEVAGKL…MLSEARGLRD (81 aa)) are a coiled coil. The tract at residues 749-798 (DDLKAPAPEPAPLSPGGHRSVESLADEAGITDQAGSLLPAKDNRPSEDLD) is disordered. Ser762 is modified (phosphoserine). Over residues 789 to 798 (KDNRPSEDLD) the composition is skewed to basic and acidic residues.

The protein resides in the plastid. It is found in the chloroplast. This is an uncharacterized protein from Arabidopsis thaliana (Mouse-ear cress).